Here is a 101-residue protein sequence, read N- to C-terminus: Integration host factor subunit beta (101 aa).

The protein belongs to the bacterial histone-like protein family. Heterodimer of an alpha and a beta chain.

Its function is as follows. This protein is one of the two subunits of integration host factor, a specific DNA-binding protein that functions in genetic recombination as well as in transcriptional and translational control. This chain is Integration host factor subunit beta, found in Nitrobacter hamburgensis (strain DSM 10229 / NCIMB 13809 / X14).